We begin with the raw amino-acid sequence, 583 residues long: CD166 antigen (583 aa).

An N-terminal signal peptide occupies residues 1 to 27; sequence MESKGASSCRLLFCLLISATVFRPGLG. Ig-like V-type domains lie at 28–120 and 125–234; these read WYTV…TEDN and PTIV…KTIH. Over 28 to 527 the chain is Extracellular; the sequence is WYTVNSAYGD…NREKVNDQAK (500 aa). Cystine bridges form between Cys-43-Cys-113 and Cys-157-Cys-220. Asn-91, Asn-95, Asn-167, Asn-265, Asn-306, Asn-361, Asn-457, Asn-480, and Asn-499 each carry an N-linked (GlcNAc...) asparagine glycan. Ig-like C2-type domains lie at 245–328, 333–409, and 416–501; these read PTEQ…TAIT, DLSL…ESLT, and PQIK…LNVS. Cystine bridges form between Cys-270–Cys-313, Cys-354–Cys-392, and Cys-435–Cys-485. A helical transmembrane segment spans residues 528–549; that stretch reads LIVGIVVGLLLAALVAGVVYWL. The Cytoplasmic portion of the chain corresponds to 550 to 583; sequence YMKKSKTASKHVNKDLGNMEENKKLEENNHKTEA. The disordered stretch occupies residues 562 to 583; the sequence is NKDLGNMEENKKLEENNHKTEA. Over residues 569–583 the composition is skewed to basic and acidic residues; that stretch reads EENKKLEENNHKTEA.

As to quaternary structure, homodimer. Interacts (via extracellular domain) with CD6 (via extracellular domain). Homodimerization and interaction with CD6 involve the same region and cannot occur simultaneously. The affinity for CD6 is much higher than the affinity for self-association. Interacts (via glycosylated extracellular domain) with LGALS1 and LGALS3. Interaction with LGALS1 or LGALS3 inhibits interaction with CD6. In terms of processing, glycosylated. Detected on hematopoietic stem cells derived from umbilical cord blood. Detected on lymph vessel endothelial cells, skin and tonsil. Detected on peripheral blood monocytes. Detected on monocyte-derived dendritic cells (at protein level). Detected at low levels in spleen, placenta, liver. Expressed by activated T-cells, B-cells, monocytes and thymic epithelial cells. Isoform 1 and isoform 3 are detected in vein and artery endothelial cells, astrocytes, keratinocytes and artery smooth muscle cells. Expressed by neurons in the brain. Restricted expression in tumor cell lines. Detected in highly metastasizing melanoma cell lines.

The protein localises to the cell membrane. It is found in the cell projection. The protein resides in the axon. Its subcellular location is the dendrite. It localises to the secreted. Its function is as follows. Cell adhesion molecule that mediates both heterotypic cell-cell contacts via its interaction with CD6, as well as homotypic cell-cell contacts. Promotes T-cell activation and proliferation via its interactions with CD6. Contributes to the formation and maturation of the immunological synapse via its interactions with CD6. Mediates homotypic interactions with cells that express ALCAM. Acts as a ligand for the LILRB4 receptor, enhancing LILRB4-mediated inhibition of T cell proliferation. Required for normal hematopoietic stem cell engraftment in the bone marrow. Mediates attachment of dendritic cells onto endothelial cells via homotypic interaction. Inhibits endothelial cell migration and promotes endothelial tube formation via homotypic interactions. Required for normal organization of the lymph vessel network. Required for normal hematopoietic stem cell engraftment in the bone marrow. Plays a role in hematopoiesis; required for normal numbers of hematopoietic stem cells in bone marrow. Promotes in vitro osteoblast proliferation and differentiation. Promotes neurite extension, axon growth and axon guidance; axons grow preferentially on surfaces that contain ALCAM. Mediates outgrowth and pathfinding for retinal ganglion cell axons. Functionally, inhibits activities of membrane-bound isoforms by competing for the same interaction partners. Inhibits cell attachment via homotypic interactions. Promotes endothelial cell migration. Inhibits endothelial cell tube formation. The chain is CD166 antigen (ALCAM) from Homo sapiens (Human).